We begin with the raw amino-acid sequence, 511 residues long: Maturase K (511 aa).

It belongs to the intron maturase 2 family. MatK subfamily.

The protein resides in the plastid. It is found in the chloroplast. In terms of biological role, usually encoded in the trnK tRNA gene intron. Probably assists in splicing its own and other chloroplast group II introns. The sequence is that of Maturase K from Brachypodium sylvaticum (False brome).